A 655-amino-acid polypeptide reads, in one-letter code: DNA topoisomerase 4 subunit B (655 aa).

ATP-binding positions include Tyr9, Asn49, Asp76, 116 to 122 (GLHGVGA), and Lys340. Positions 387 to 397 (AARKAREEARS) are enriched in basic and acidic residues. The disordered stretch occupies residues 387 to 419 (AARKAREEARSGKKRKKSEATLSGKLTPAGSRN). In terms of domain architecture, Toprim spans 423–537 (NELYLVEGDS…HGKVFIALPP (115 aa)). Residues Glu429, Asp502, and Asp504 each contribute to the Mg(2+) site.

Belongs to the type II topoisomerase family. ParE type 2 subfamily. As to quaternary structure, heterotetramer composed of ParC and ParE. Mg(2+) is required as a cofactor. It depends on Mn(2+) as a cofactor. Requires Ca(2+) as cofactor.

It carries out the reaction ATP-dependent breakage, passage and rejoining of double-stranded DNA.. Its function is as follows. Topoisomerase IV is essential for chromosome segregation. It relaxes supercoiled DNA. Performs the decatenation events required during the replication of a circular DNA molecule. This Bacillus subtilis (strain 168) protein is DNA topoisomerase 4 subunit B.